Consider the following 201-residue polypeptide: Ribonuclease HII (201 aa).

The RNase H type-2 domain maps to Asp-12 to Glu-201. 3 residues coordinate a divalent metal cation: Asp-18, Glu-19, and Asp-110.

Belongs to the RNase HII family. It depends on Mn(2+) as a cofactor. Requires Mg(2+) as cofactor.

It localises to the cytoplasm. It carries out the reaction Endonucleolytic cleavage to 5'-phosphomonoester.. In terms of biological role, endonuclease that specifically degrades the RNA of RNA-DNA hybrids. The polypeptide is Ribonuclease HII (Pseudomonas paraeruginosa (strain DSM 24068 / PA7) (Pseudomonas aeruginosa (strain PA7))).